Here is a 123-residue protein sequence, read N- to C-terminus: MVRTKADCAGSSSGSYRKAVAARAPRKTFGSSSSGSNHDTSPTGKKSECKYAGGNPVCVRPIPTWQKGIGDFFGSPSTSQPEKENRIPSDDEEAGGSGAGKKPRKSRPLPPDPSEEAADSGDE.

Positions 1–123 are disordered; it reads MVRTKADCAG…SEEAADSGDE (123 aa). A D-box motif is present at residues 26–37; that stretch reads RKTFGSSSSGSN. Residues 66 to 77 carry the PIP-box motif; that stretch reads QKGIGDFFGSPS. Residues 83–85 carry the KEN box motif; the sequence is KEN. The Initiation motif signature appears at 93-105; it reads EAGGSGAGKKPRK. The segment covering 113 to 123 has biased composition (acidic residues); that stretch reads PSEEAADSGDE.

As to quaternary structure, interacts with pcna.

Its subcellular location is the nucleus. It localises to the cytoplasm. The protein localises to the perinuclear region. Functionally, PCNA-binding protein that acts as a regulator of DNA repair during DNA replication. Following DNA damage, the interaction with pcna is disrupted, facilitating the interaction between monoubiquitinated pcna and the translesion DNA synthesis DNA polymerase eta (polh) at stalled replisomes, facilitating the bypass of replication-fork-blocking lesions. Also acts as a regulator of centrosome number. In Xenopus laevis (African clawed frog), this protein is PCNA-associated factor.